The following is a 92-amino-acid chain: Small ribosomal subunit protein uS19 (92 aa).

This sequence belongs to the universal ribosomal protein uS19 family.

In terms of biological role, protein S19 forms a complex with S13 that binds strongly to the 16S ribosomal RNA. This is Small ribosomal subunit protein uS19 from Lactococcus lactis subsp. cremoris (strain MG1363).